A 435-amino-acid polypeptide reads, in one-letter code: Sex peptide receptor (435 aa).

The Extracellular portion of the chain corresponds to 1–93 (MDNYTDVLYQ…PLEYAMPLYG (93 aa)). The helical transmembrane segment at 94-114 (YCMPFLLIITIISNSLIVLVL) threads the bilayer. Over 115–124 (SKKSMATPTN) the chain is Cytoplasmic. Residues 125-145 (FVLMGMAICDMLTVIFPAPGL) traverse the membrane as a helical segment. At 146-168 (WYMYTFGNHYKPLHPVSMCLAYS) the chain is on the extracellular side. The helical transmembrane segment at 169–189 (IFNEIMPAMCHTISVWLTLAL) threads the bilayer. Over 190–211 (AVQRYIYVCHAPMARTWCTMPR) the chain is Cytoplasmic. A helical transmembrane segment spans residues 212–229 (VRRCTAYIALLAFLHQLP). Residues 230-276 (RFFDRTYMPLVIEWNGSPTEVCHLETSMWVHDYIGVDLYYTSYYLFR) are Extracellular-facing. Residues 277 to 297 (VLFVHLLPCIILVTLNILLFA) traverse the membrane as a helical segment. The Cytoplasmic segment spans residues 298-327 (AMRQAQERRKLLFRENRKKECKKLRETNCT). Residues 328-348 (TLMLIVVVSVFLLAEIPIAVV) traverse the membrane as a helical segment. The Extracellular segment spans residues 349 to 368 (TAMHIVSSLIIEFLDYGLAN). A helical membrane pass occupies residues 369–389 (ICIMLTNFFLVFSYPINFGIY). The Cytoplasmic segment spans residues 390-435 (CGMSRQFRETFKEIFLGRLMAKKDSSTKYSIVNGARTCTNTNETVL).

The protein belongs to the G-protein coupled receptor 1 family. As to expression, in the female, expressed in the reproductive organs; strongly expressed in the spermathecae and the lower oviduct. No expression in the male reproductive organs. In the central nervous system of both sexes, it is expressed in the brain and ventral nerve cord (VNC); strongly expressed in the ventral regions of the suboesophageal ganglion, the cervical connective and in many nerve roots of the brain and VNC. Expressed in the s-LNvs and l-LNvs pdf neurons (at protein level).

Its subcellular location is the cell membrane. Receptor for two functionally unrelated ligands; SP (A70A) for controlling reproductive behaviors and MIP for controlling sleep behavior. MIP-SPR pathway functions as a sleep homeostat which perceives the need for sleep and stabilizes it by providing a slow-acting inhibitory input to the fly arousal system that involve the pigment dispersing factor (pdf) neurons. SP-SPR is one of the multiple SP pathways that induce female post-mating behavioral responses (PMR) such as the suppression of mating receptivity and initiation of egg laying. The PMR switch is achieved by mediating the synaptic output of neurons such as those expressing fruitless (fru), double sex (dsx) and pickpocket (ppk). The chain is Sex peptide receptor from Drosophila melanogaster (Fruit fly).